Here is a 93-residue protein sequence, read N- to C-terminus: Cobalt transport protein CbiN (93 aa).

Helical transmembrane passes span 5–25 (LILL…NHGG) and 63–83 (LLFT…LGYA).

This sequence belongs to the CbiN family. Forms an energy-coupling factor (ECF) transporter complex composed of an ATP-binding protein (A component, CbiO), a transmembrane protein (T component, CbiQ) and 2 possible substrate-capture proteins (S components, CbiM and CbiN) of unknown stoichimetry.

The protein resides in the cell inner membrane. It participates in cofactor biosynthesis; adenosylcobalamin biosynthesis. Functionally, part of the energy-coupling factor (ECF) transporter complex CbiMNOQ involved in cobalt import. In Klebsiella pneumoniae subsp. pneumoniae (strain ATCC 700721 / MGH 78578), this protein is Cobalt transport protein CbiN.